The sequence spans 359 residues: Peptide chain release factor 1 (359 aa).

N5-methylglutamine is present on Q236.

This sequence belongs to the prokaryotic/mitochondrial release factor family. Post-translationally, methylated by PrmC. Methylation increases the termination efficiency of RF1.

The protein resides in the cytoplasm. In terms of biological role, peptide chain release factor 1 directs the termination of translation in response to the peptide chain termination codons UAG and UAA. The chain is Peptide chain release factor 1 from Streptococcus thermophilus (strain ATCC BAA-250 / LMG 18311).